A 400-amino-acid chain; its full sequence is Arrestin, lateral eye (400 aa).

It belongs to the arrestin family. Phosphorylated.

Plays an important role in the photoreceptor transduction. This chain is Arrestin, lateral eye, found in Limulus polyphemus (Atlantic horseshoe crab).